Reading from the N-terminus, the 355-residue chain is Guanine nucleotide-binding protein G(i) subunit alpha-2 (355 aa).

Residue Gly2 is the site of N-myristoyl glycine attachment. Cys3 carries the S-palmitoyl cysteine lipid modification. The G-alpha domain occupies 32-355; sequence REVKLLLLGA…KNNLKDCGLF (324 aa). Positions 35-48 are G1 motif; it reads KLLLLGAGESGKST. GTP-binding positions include 40-47, 176-182, 201-205, 270-273, and Ala327; these read GAGESGKS, LRTRVKT, DVGGQ, and NKKD. The Mg(2+) site is built by Ser47 and Thr182. The segment at 174–182 is G2 motif; it reads DVLRTRVKT. Positions 197 to 206 are G3 motif; that stretch reads FKMFDVGGQR. Residues 266 to 273 are G4 motif; the sequence is ILFLNKKD. Residues 325–330 form a G5 motif region; it reads TCATDT.

It belongs to the G-alpha family. G(i/o/t/z) subfamily. G proteins are composed of 3 units; alpha, beta and gamma. The alpha chain contains the guanine nucleotide binding site.

The protein localises to the cytoplasm. The protein resides in the cytoskeleton. It localises to the microtubule organizing center. Its subcellular location is the centrosome. It is found in the cell membrane. In terms of biological role, guanine nucleotide-binding proteins (G proteins) are involved as modulators or transducers in various transmembrane signaling systems. The G(i) proteins are involved in hormonal regulation of adenylate cyclase: they inhibit the cyclase in response to beta-adrenergic stimuli. May play a role in cell division. This Gallus gallus (Chicken) protein is Guanine nucleotide-binding protein G(i) subunit alpha-2 (GNAI2).